The chain runs to 205 residues: ATP phosphoribosyltransferase (205 aa).

This sequence belongs to the ATP phosphoribosyltransferase family. Short subfamily. Heteromultimer composed of HisG and HisZ subunits.

The protein localises to the cytoplasm. The catalysed reaction is 1-(5-phospho-beta-D-ribosyl)-ATP + diphosphate = 5-phospho-alpha-D-ribose 1-diphosphate + ATP. The protein operates within amino-acid biosynthesis; L-histidine biosynthesis; L-histidine from 5-phospho-alpha-D-ribose 1-diphosphate: step 1/9. Its function is as follows. Catalyzes the condensation of ATP and 5-phosphoribose 1-diphosphate to form N'-(5'-phosphoribosyl)-ATP (PR-ATP). Has a crucial role in the pathway because the rate of histidine biosynthesis seems to be controlled primarily by regulation of HisG enzymatic activity. This chain is ATP phosphoribosyltransferase, found in Nitratiruptor sp. (strain SB155-2).